The following is a 711-amino-acid chain: DNA topoisomerase 3 (711 aa).

The region spanning 2-135 is the Toprim domain; sequence KSLILAEKPS…IKRLWISSVT (134 aa). Glu-8 and Asp-104 together coordinate Mg(2+). The Topo IA-type catalytic domain maps to 152 to 580; it reads YQNLYEAALA…EMKNFTFKVV (429 aa). An interaction with DNA region spans residues 186-191; that stretch reads SLGRVQ. The active-site O-(5'-phospho-DNA)-tyrosine intermediate is Tyr-305.

The protein belongs to the type IA topoisomerase family. The cofactor is Mg(2+).

It catalyses the reaction ATP-independent breakage of single-stranded DNA, followed by passage and rejoining.. Functionally, releases the supercoiling and torsional tension of DNA, which is introduced during the DNA replication and transcription, by transiently cleaving and rejoining one strand of the DNA duplex. Introduces a single-strand break via transesterification at a target site in duplex DNA. The scissile phosphodiester is attacked by the catalytic tyrosine of the enzyme, resulting in the formation of a DNA-(5'-phosphotyrosyl)-enzyme intermediate and the expulsion of a 3'-OH DNA strand. The free DNA strand then undergoes passage around the unbroken strand, thus removing DNA supercoils. Finally, in the religation step, the DNA 3'-OH attacks the covalent intermediate to expel the active-site tyrosine and restore the DNA phosphodiester backbone. The sequence is that of DNA topoisomerase 3 from Staphylococcus epidermidis (strain ATCC 12228 / FDA PCI 1200).